We begin with the raw amino-acid sequence, 222 residues long: Protein MKS1 (222 aa).

The segment at 1–61 (MDPSEYFAGG…PNRDQPPPYI (61 aa)) is disordered. A compositionally biased stretch (polar residues) spans 12 to 21 (PSDQQNQKRQ). S30 carries the phosphoserine modification. Over residues 37–46 (DSHKIKKPPK) the composition is skewed to basic residues. Residues 47-61 (HPAPPPNRDQPPPYI) show a composition bias toward pro residues. S72 bears the Phosphoserine mark. The short motif at 83-92 (FMNVVQRLTG) is the VQ element. Residues 105-130 (GDVSPAARLASTENASPRGGKEPAAR) form a disordered region. 2 positions are modified to phosphoserine: S108 and S120.

Interacts with MPK4, WRKY25 and WRKY33. Phosphorylated on serine residue by MPK4.

The protein localises to the nucleus. Its function is as follows. Regulator of plant defense response. May contribute to MPK4-regulated defense activation by coupling the kinase to specific WRKY transcription factors. This Arabidopsis thaliana (Mouse-ear cress) protein is Protein MKS1 (MKS1).